Consider the following 92-residue polypeptide: Endoribonuclease HigB (92 aa).

The active site involves H92.

As to quaternary structure, forms a complex with the antitoxin HigA which inhibits the mRNA interferase activity. The heterodimer dimerizes to form a HigB-(HigA)2-HigB tetramer that is able to bind to the DNA.

Its function is as follows. Toxic component of a type II toxin-antitoxin (TA) system. A ribosome-associated translation-dependent mRNA interferase. Inhibits translation by sequence-specific cleavage of mRNA. Prefers either in-frame or out-of-frame 5'-AAA-3' codons (lysine). Also cleaves the first three AAAs of stretches of four or more A sequences. 20% of codons containing AA are cleaved and occassionally cuts even at a single A. In Proteus vulgaris, this protein is Endoribonuclease HigB.